The sequence spans 333 residues: DNA-directed RNA polymerase subunit alpha (333 aa).

The alpha N-terminal domain (alpha-NTD) stretch occupies residues 1–234 (MQSSVNEFLT…QQLAAFVDLK (234 aa)). Residues 248–333 (IDPILLRPVD…SLKKDDKATA (86 aa)) form an alpha C-terminal domain (alpha-CTD) region.

Belongs to the RNA polymerase alpha chain family. As to quaternary structure, homodimer. The RNAP catalytic core consists of 2 alpha, 1 beta, 1 beta' and 1 omega subunit. When a sigma factor is associated with the core the holoenzyme is formed, which can initiate transcription.

The catalysed reaction is RNA(n) + a ribonucleoside 5'-triphosphate = RNA(n+1) + diphosphate. Its function is as follows. DNA-dependent RNA polymerase catalyzes the transcription of DNA into RNA using the four ribonucleoside triphosphates as substrates. The chain is DNA-directed RNA polymerase subunit alpha from Stutzerimonas stutzeri (strain A1501) (Pseudomonas stutzeri).